The chain runs to 123 residues: Large ribosomal subunit protein bL12 (123 aa).

It belongs to the bacterial ribosomal protein bL12 family. As to quaternary structure, homodimer. Part of the ribosomal stalk of the 50S ribosomal subunit. Forms a multimeric L10(L12)X complex, where L10 forms an elongated spine to which 2 to 4 L12 dimers bind in a sequential fashion. Binds GTP-bound translation factors.

In terms of biological role, forms part of the ribosomal stalk which helps the ribosome interact with GTP-bound translation factors. Is thus essential for accurate translation. This is Large ribosomal subunit protein bL12 from Clostridium botulinum (strain ATCC 19397 / Type A).